The chain runs to 786 residues: Probable glutamine--tRNA ligase (786 aa).

Basic and acidic residues predominate over residues 181–198; it reads DLAPKKKEKKPEGPKPSK. The disordered stretch occupies residues 181–218; that stretch reads DLAPKKKEKKPEGPKPSKDAAAAATAPGTKNQKEASPE. The 'HIGH' region motif lies at 276 to 286; that stretch reads PEPNGVLHIGH. ATP contacts are provided by residues 277 to 279 and 283 to 289; these read EPN and HIGHAKA. The L-glutamine site is built by D309 and Y444. Residues T463, 492–493, and 500–502 each bind ATP; these read RL and VSK. The 'KMSKS' region signature appears at 499–503; it reads VVSKR.

It belongs to the class-I aminoacyl-tRNA synthetase family.

The catalysed reaction is tRNA(Gln) + L-glutamine + ATP = L-glutaminyl-tRNA(Gln) + AMP + diphosphate. The chain is Probable glutamine--tRNA ligase from Caenorhabditis elegans.